The sequence spans 200 residues: Recombination protein RecR (200 aa).

The C4-type zinc-finger motif lies at 57–72 (CEHCRTFTEEDICSIC). The region spanning 81–176 (RLLCVVEMPA…KVSRIAHGIP (96 aa)) is the Toprim domain.

It belongs to the RecR family.

May play a role in DNA repair. It seems to be involved in an RecBC-independent recombinational process of DNA repair. It may act with RecF and RecO. In Mannheimia succiniciproducens (strain KCTC 0769BP / MBEL55E), this protein is Recombination protein RecR.